Here is a 395-residue protein sequence, read N- to C-terminus: MLRWLTAGESHGPALVAVLEGLPAGVEITTTQIGDALARRRLGYGRGARMSFERDEVRLLGGVRHGLTQGGPIAVEIGNTEWPKWETVMAADPVDPAALTGARGAPLTRPRPGHADLIGMTKYGFDEARPVLERASARETASRVALGRVAAAFLEQAAGVRLVSHVVAIGPVSAPDDADLPTPDDVAALDADPIRCFDAATSAAMVAEIDDAQKAGDTLGGVVEVLAYGLPPGLGSYVQSDRRLDGRLAGVLMGIQAIKGVEVGDGFRTAARRGSAAHDEIERATDGRVRRRTNRAGGVEGGMTNGEVLRVRAAMKPISTVPRALDTIDTATGDAAKAIHQRSDVCAVAPAAVVAEAMVALVLAQALLEKVGGDSVAESARNLTSYLEAIPEQQR.

Positions 40 and 46 each coordinate NADP(+). Residues 134–136 (RAS), 256–257 (QA), glycine 301, 316–320 (KPIST), and arginine 342 each bind FMN.

The protein belongs to the chorismate synthase family. In terms of assembly, homotetramer. The cofactor is FMNH2.

It catalyses the reaction 5-O-(1-carboxyvinyl)-3-phosphoshikimate = chorismate + phosphate. It participates in metabolic intermediate biosynthesis; chorismate biosynthesis; chorismate from D-erythrose 4-phosphate and phosphoenolpyruvate: step 7/7. In terms of biological role, catalyzes the anti-1,4-elimination of the C-3 phosphate and the C-6 proR hydrogen from 5-enolpyruvylshikimate-3-phosphate (EPSP) to yield chorismate, which is the branch point compound that serves as the starting substrate for the three terminal pathways of aromatic amino acid biosynthesis. This reaction introduces a second double bond into the aromatic ring system. The protein is Chorismate synthase of Beutenbergia cavernae (strain ATCC BAA-8 / DSM 12333 / CCUG 43141 / JCM 11478 / NBRC 16432 / NCIMB 13614 / HKI 0122).